Reading from the N-terminus, the 225-residue chain is MGIKDWPDGEGPRDRLIKFGVSQLSDAEVLAVLLRNGSQGLNAVELARNLINEFGGLREVLAASQSQVCRLSGMGPVKFAQLRAAVELSSRVSAQNLKRGKILSDPDLTRDYLMRQLRDRAYEVFAILLLDSQHRVIQFVELFRGTIDSASVYPRDVVSLVLEKKAAAVIVCHNHPSGVAEPSHADRRITERLKCALSTIDVSLLDHMVVGDREIVSFAERGWID.

Residues 102-224 enclose the MPN domain; the sequence is ILSDPDLTRD…IVSFAERGWI (123 aa). Positions 173, 175, and 186 each coordinate Zn(2+). The short motif at 173–186 is the JAMM motif element; it reads HNHPSGVAEPSHAD.

Belongs to the UPF0758 family.

The polypeptide is UPF0758 protein Swoo_4561 (Shewanella woodyi (strain ATCC 51908 / MS32)).